Reading from the N-terminus, the 321-residue chain is Beta-ketoacyl-[acyl-carrier-protein] synthase III (321 aa).

Catalysis depends on residues cysteine 115 and histidine 248. The interval 249–253 is ACP-binding; that stretch reads QANIR. Asparagine 278 is an active-site residue.

Belongs to the thiolase-like superfamily. FabH family. In terms of assembly, homodimer.

The protein resides in the cytoplasm. It carries out the reaction malonyl-[ACP] + acetyl-CoA + H(+) = 3-oxobutanoyl-[ACP] + CO2 + CoA. It functions in the pathway lipid metabolism; fatty acid biosynthesis. Catalyzes the condensation reaction of fatty acid synthesis by the addition to an acyl acceptor of two carbons from malonyl-ACP. Catalyzes the first condensation reaction which initiates fatty acid synthesis and may therefore play a role in governing the total rate of fatty acid production. Possesses both acetoacetyl-ACP synthase and acetyl transacylase activities. Its substrate specificity determines the biosynthesis of branched-chain and/or straight-chain of fatty acids. The chain is Beta-ketoacyl-[acyl-carrier-protein] synthase III from Azoarcus sp. (strain BH72).